The sequence spans 242 residues: Small ribosomal subunit protein uS2 (242 aa).

Belongs to the universal ribosomal protein uS2 family.

This Tolumonas auensis (strain DSM 9187 / NBRC 110442 / TA 4) protein is Small ribosomal subunit protein uS2.